Consider the following 82-residue polypeptide: RNA-binding protein Hfq (82 aa).

The Sm domain occupies 9–69 (DQLLNTARKD…ISTIIPAKII (61 aa)).

The protein belongs to the Hfq family. Homohexamer.

In terms of biological role, RNA chaperone that binds small regulatory RNA (sRNAs) and mRNAs to facilitate mRNA translational regulation in response to envelope stress, environmental stress and changes in metabolite concentrations. Also binds with high specificity to tRNAs. This Leptospira borgpetersenii serovar Hardjo-bovis (strain L550) protein is RNA-binding protein Hfq.